We begin with the raw amino-acid sequence, 764 residues long: Thyrotropin receptor (764 aa).

The signal sequence occupies residues methionine 1–glycine 20. Topologically, residues glycine 21–glycine 413 are extracellular. The cysteines at positions 31 and 41 are disulfide-linked. Asparagine 77 and asparagine 99 each carry an N-linked (GlcNAc...) asparagine glycan. LRR repeat units lie at residues leucine 125 to serine 149, threonine 150 to glycine 174, cysteine 176 to glycine 199, lysine 201 to glycine 223, tyrosine 225 to histidine 248, and lysine 250 to histidine 271. 2 N-linked (GlcNAc...) asparagine glycosylation sites follow: asparagine 177 and asparagine 198. The N-linked (GlcNAc...) asparagine glycan is linked to asparagine 302. Sulfotyrosine is present on tyrosine 385. Residues tyrosine 414–threonine 441 form a helical membrane-spanning segment. Residues serine 442–arginine 450 are Cytoplasmic-facing. A helical transmembrane segment spans residues phenylalanine 451–valine 473. At aspartate 474–cysteine 494 the chain is on the extracellular side. Cysteine 494 and cysteine 569 are oxidised to a cystine. The helical transmembrane segment at asparagine 495–leucine 517 threads the bilayer. Topologically, residues glutamate 518–histidine 537 are cytoplasmic. A helical membrane pass occupies residues alanine 538 to isoleucine 560. Topologically, residues serine 561 to leucine 580 are extracellular. The helical transmembrane segment at alanine 581–valine 602 threads the bilayer. Over lysine 603–arginine 625 the chain is Cytoplasmic. The helical transmembrane segment at methionine 626–methionine 649 threads the bilayer. The Extracellular portion of the chain corresponds to asparagine 650 to lysine 660. The helical transmembrane segment at isoleucine 661–threonine 682 threads the bilayer. The Cytoplasmic segment spans residues lysine 683 to leucine 764. The PDZ-binding motif lies at threonine 762–leucine 764.

Belongs to the G-protein coupled receptor 1 family. FSH/LSH/TSH subfamily. As to quaternary structure, interacts with heterodimer GPHA2:GPHB5; this interaction stimulates cAMP production. Interacts (via the PDZ-binding motif) with SCRIB; regulates TSHR trafficking and function. Glycosylated. In terms of processing, sulfated. Sulfation on Tyr-385 plays a role in thyrotropin receptor binding and activation.

It localises to the cell membrane. Its subcellular location is the basolateral cell membrane. In terms of biological role, receptor for the thyroid-stimulating hormone (TSH) or thyrotropin. Also acts as a receptor for the heterodimeric glycoprotein hormone (GPHA2:GPHB5) or thyrostimulin. The activity of this receptor is mediated by G proteins which activate adenylate cyclase. Plays a central role in controlling thyroid cell metabolism. The chain is Thyrotropin receptor (TSHR) from Canis lupus familiaris (Dog).